The sequence spans 191 residues: Large ribosomal subunit protein uL6 (191 aa).

It belongs to the universal ribosomal protein uL6 family. As to quaternary structure, part of the 50S ribosomal subunit.

Functionally, this protein binds to the 23S rRNA, and is important in its secondary structure. It is located near the subunit interface in the base of the L7/L12 stalk, and near the tRNA binding site of the peptidyltransferase center. This chain is Large ribosomal subunit protein uL6, found in Gloeobacter violaceus (strain ATCC 29082 / PCC 7421).